The chain runs to 342 residues: Cytosolic Fe-S cluster assembly factor NBP35 (342 aa).

The tract at residues 1 to 45 (MGPSLETPEPVEDVLANPLKQKPQLVAPEPEHCPGPESEQAGTAD) is disordered. C33, C47, C50, and C56 together coordinate [4Fe-4S] cluster. 86 to 93 (GKGGVGKS) lines the ATP pocket. [4Fe-4S] cluster is bound by residues C259 and C262.

Belongs to the Mrp/NBP35 ATP-binding proteins family. NUBP1/NBP35 subfamily. Heterotetramer of 2 NBP35 and 2 CFD1 chains. Requires [4Fe-4S] cluster as cofactor.

It localises to the cytoplasm. In terms of biological role, component of the cytosolic iron-sulfur (Fe/S) protein assembly (CIA) machinery. Required for maturation of extramitochondrial Fe-S proteins. The NBP35-CFD1 heterotetramer forms a Fe-S scaffold complex, mediating the de novo assembly of an Fe-S cluster and its transfer to target apoproteins. This Chaetomium globosum (strain ATCC 6205 / CBS 148.51 / DSM 1962 / NBRC 6347 / NRRL 1970) (Soil fungus) protein is Cytosolic Fe-S cluster assembly factor NBP35.